Consider the following 196-residue polypeptide: Protein Flattop (196 aa).

Residues 107-196 form a disordered region; the sequence is NGLRPEIFGK…PHAGRNLAEV (90 aa). The span at 113–124 shows a compositional bias: basic and acidic residues; it reads IFGKPHDPDSQK. Low complexity predominate over residues 137–149; it reads APSPTIIPSSPAS. The span at 150 to 162 shows a compositional bias: polar residues; the sequence is NLSSPDQLQSSHP.

The protein belongs to the Flattop family. In terms of assembly, microtubule inner protein component of sperm flagellar doublet microtubules. Interacts with DLG3. In terms of tissue distribution, expressed in trachea multiciliated cells.

It localises to the cytoplasm. Its subcellular location is the cytoskeleton. The protein resides in the cilium basal body. The protein localises to the cell projection. It is found in the cilium. It localises to the apical cell membrane. Its subcellular location is the cilium axoneme. The protein resides in the flagellum axoneme. Microtubule inner protein (MIP) part of the dynein-decorated doublet microtubules (DMTs) in cilia axoneme. Acts as a regulator of cilium basal body docking and positioning in mono- and multiciliated cells. Regulates basal body docking and cilia formation in multiciliated lung cells. Regulates kinocilium positioning and stereocilia bundle morphogenesis in the inner ear. The polypeptide is Protein Flattop (Bos taurus (Bovine)).